A 351-amino-acid chain; its full sequence is Trans-enoyl reductase grgB (351 aa).

In terms of domain architecture, Enoyl reductase (ER) spans 10–346; sequence GAESGGYRLA…GKVHAKKLVV (337 aa). Residues 161–164, 184–187, Y202, 249–250, and 339–340 contribute to the NADP(+) site; these read ATAT, SPAN, LE, and VH.

Belongs to the zinc-containing alcohol dehydrogenase family.

It functions in the pathway secondary metabolite biosynthesis. In terms of biological role, trans-enoyl reductase; part of the gene cluster that mediates the biosynthesis of gregatin A, a fungal polyketide featuring an alkylated furanone core. The PKS grgA synthesizes C11 and C4 polyketide chains in the presence and absence of the trans-enoyl reductase grgB, respectively. The polyketide transferase grgF is then responsible for the fusion of the two carbon chains to produce the furanone skeleton of gregatin A. Next, the cytochrome P450 monooxygenase grgG accepts performs the oxidative cyclization to furnish the gregatin scaffold and leads to the formation of desmethylgregatin A. Finally, the O-methyltransferase grgD methylates the carboxyl group of desmethylgregatin A to provide gregatin A. The sequence is that of Trans-enoyl reductase grgB from Penicillium sp.